The chain runs to 153 residues: Ribosome maturation factor RimP (153 aa).

It belongs to the RimP family.

It localises to the cytoplasm. Functionally, required for maturation of 30S ribosomal subunits. The protein is Ribosome maturation factor RimP of Histophilus somni (strain 2336) (Haemophilus somnus).